The primary structure comprises 349 residues: L-lactate dehydrogenase (349 aa).

Residues 199–219 (APEGSIIGADGNPTTDASTMF) form a disordered region.

This sequence belongs to the LDH2/MDH2 oxidoreductase family.

It localises to the cytoplasm. It carries out the reaction (S)-lactate + NAD(+) = pyruvate + NADH + H(+). It functions in the pathway fermentation; pyruvate fermentation to lactate; (S)-lactate from pyruvate: step 1/1. The protein is L-lactate dehydrogenase (ldh) of Cupriavidus necator (strain ATCC 17699 / DSM 428 / KCTC 22496 / NCIMB 10442 / H16 / Stanier 337) (Ralstonia eutropha).